Consider the following 425-residue polypeptide: Serine hydroxymethyltransferase (425 aa).

Residues leucine 126 and 130–132 (GHL) contribute to the (6S)-5,6,7,8-tetrahydrofolate site. At lysine 234 the chain carries N6-(pyridoxal phosphate)lysine.

Belongs to the SHMT family. In terms of assembly, homodimer. Requires pyridoxal 5'-phosphate as cofactor.

The protein localises to the cytoplasm. It catalyses the reaction (6R)-5,10-methylene-5,6,7,8-tetrahydrofolate + glycine + H2O = (6S)-5,6,7,8-tetrahydrofolate + L-serine. It functions in the pathway one-carbon metabolism; tetrahydrofolate interconversion. Its pathway is amino-acid biosynthesis; glycine biosynthesis; glycine from L-serine: step 1/1. Functionally, catalyzes the reversible interconversion of serine and glycine with tetrahydrofolate (THF) serving as the one-carbon carrier. This reaction serves as the major source of one-carbon groups required for the biosynthesis of purines, thymidylate, methionine, and other important biomolecules. Also exhibits THF-independent aldolase activity toward beta-hydroxyamino acids, producing glycine and aldehydes, via a retro-aldol mechanism. The protein is Serine hydroxymethyltransferase of Desulfotalea psychrophila (strain LSv54 / DSM 12343).